Here is a 494-residue protein sequence, read N- to C-terminus: MDMHCKADPFSAMHRHGGVNQLGGVFVNGRPLPDVVRQRIVELAHQGVRPCDISRQLRVSHGCVSKILGRYYETGSIKPGVIGGSKPKVATPKVVDKIADYKRQNPTMFAWEIRDRLLAEGICDNDTVPSVSSINRIIRTKVQQPFHPTPDGTPVSTPGHTLVPSTASPPVSSASNDPVGSYSINGILGIPRSNGEKRKRDEDGSDGSGPNGDSQSSVESLRKHLRADNFTQQQLEALDRVFERPSYPDVFQSAEHIKSEQASEYSLPALTPGLDEVKSSLSASGNADLGSNVSGPQSYPVVTESFASHLYLKQEPHEASLTPFTPSSLASSGLADIQPFQMALTVDASTPTYSSFTHHGPPYGQFGSQPLIAGRDMSSTTLPGYPPHVPPTGQGSYPTSTLAGMVPGTNVSVHHSVQPVECCSCLSSSKPCLFHCRTGSGSEFSGNPYSHPQYTTYNEAWRFSNPALLSSPYYYSATSRGSAPPTAATAYDRH.

A DNA-binding region (paired) is located at residues Arg15 to Lys141. The segment at Gly18–Thr74 is PAI subdomain. The tract at residues Lys93–Lys141 is RED subdomain. Residues Val142–Leu221 are disordered. Residues Val163–Ser175 show a composition bias toward low complexity.

As to expression, expression becomes spatially localized at mid-gastrula stages and is localized to the nervous system (midbrain, hindbrain, spinal cord), sensory organs (optic vesicle and stalk, otic vesicle), visceral arches, developing excretory system (pronephros, pronephric duct, rectal diverticulum, proctodaeum) and thryoid gland. Splicing does not appear to be tissue-specific.

It localises to the nucleus. Functionally, probable transcription factor. Involved in kidney development, acting synergistically with lhx1/lim-1 in pronephric morphogenesis during the tailbud stages. The polypeptide is Paired box protein Pax-2-B (pax2-b) (Xenopus laevis (African clawed frog)).